Here is a 905-residue protein sequence, read N- to C-terminus: Chitin synthase 3B (905 aa).

Residues 1–10 (MAYNGRDQEY) are compositionally biased toward basic and acidic residues. The segment at 1–136 (MAYNGRDQEY…GGGGGLGRSK (136 aa)) is disordered. Positions 81 to 93 (GPTGYGDTGGSFG) are enriched in gly residues. N-linked (GlcNAc...) asparagine glycosylation is present at Asn-536. Residues 562-584 (MFFLHIQLIYTTLNTMFAWFSLG) traverse the membrane as a helical segment. Asn-601 is a glycosylation site (N-linked (GlcNAc...) asparagine). 6 helical membrane passes run 618–638 (IVNALLQYLYLAFVMLQFILA), 653–673 (SFMVFGLIQGYILVLSAYLVV), 705–725 (VILVALITIYGLNFIASFMYL), 733–753 (SFPYYLVLMSTYINILMVYAF), 832–852 (TGLVVCWLFGNILLIVCITST), and 873–893 (FLLYATAVLSLVRFFGFLWFL).

This sequence belongs to the chitin synthase family. Class III subfamily.

It localises to the cell membrane. It carries out the reaction [(1-&gt;4)-N-acetyl-beta-D-glucosaminyl](n) + UDP-N-acetyl-alpha-D-glucosamine = [(1-&gt;4)-N-acetyl-beta-D-glucosaminyl](n+1) + UDP + H(+). In terms of biological role, polymerizes chitin, a structural polymer of the cell wall and septum, by transferring the sugar moiety of UDP-GlcNAc to the non-reducing end of the growing chitin polymer. Plays essential functions in fungal survival and host infection. This chain is Chitin synthase 3B, found in Gibberella zeae (strain ATCC MYA-4620 / CBS 123657 / FGSC 9075 / NRRL 31084 / PH-1) (Wheat head blight fungus).